Here is a 146-residue protein sequence, read N- to C-terminus: Heat-stable 19 kDa antigen (146 aa).

The N-terminal stretch at 1–20 (MKFSLLSAIAAAVFVPFTSA) is a signal peptide.

The protein belongs to the cerato-platanin family. Post-translationally, glycosylated.

It localises to the secreted. In Coccidioides posadasii (strain C735) (Valley fever fungus), this protein is Heat-stable 19 kDa antigen (CSA).